Reading from the N-terminus, the 497-residue chain is Early growth response protein 1-A (497 aa).

A compositionally biased stretch (low complexity) spans S139–S165. 3 disordered regions span residues S139 to N169, Y175 to P194, and P286 to P309. 3 consecutive C2H2-type zinc fingers follow at residues Y306–H330, F336–H358, and F364–H386. Residues D377 to F441 form a disordered region. A compositionally biased stretch (basic residues) spans R381 to D391. Residues A397–F441 show a composition bias toward low complexity.

The protein belongs to the EGR C2H2-type zinc-finger protein family. Expressed in the presumptive mesoderm. In blastula embryos, expressed in the dorsal marginal zone, and at the onset of gastrulation expression is specific to the Spemann organizer. As gastrulation proceeds, expressed in a ring around the yolk plug. This expression is maintained in advanced gastrulae, with weak expression also extending into the dorsal midline. By the neurula stage, expression is excluded from the notochord. In late tailbud stages, expressed in two spots in the anterior forebrain, which are connected via a bridge of cells that also show expression.

The protein resides in the nucleus. The protein localises to the cytoplasm. Functionally, transcriptional regulator. Recognizes and binds to the DNA sequence 5'-GCG(T/G)GGGCG-3'(EGR-site) in the promoter region of target genes. Binds double-stranded target DNA, irrespective of the cytosine methylation status. Regulates the transcription of numerous target genes, and thereby plays an important role in regulating the response to growth factors, DNA damage, and ischemia. Plays a role in the regulation of cell survival, proliferation and cell death. Mediates responses to ischemia and hypoxia; regulates the expression of proteins that are involved in inflammatory processes. Plays a role in regulating the expression of circadian clock genes. This Xenopus laevis (African clawed frog) protein is Early growth response protein 1-A (egr1-a).